The sequence spans 464 residues: Putative F-box/LRR-repeat protein At3g59160 (464 aa).

The F-box domain maps to 12-60 (KDMINDLPDALLCHVLSYLTTKEAASTSLLSRRWRYLLAFVPNLEFDDS). LRR repeat units lie at residues 172–198 (TLKIRDGPPIDVKHVHLPKLKTLHLES), 200–225 (MFDEEDIGFSKLLSGCPELEELVLHH), 233–258 (SCSVSVATLKRLTFCCNNMKFCGMHE), 336–367 (VLCLSADTLEVLTYCCKQIPIFNNLTHVTIQS), 368–393 (TPKVGWKSLLKLLKNSPKLQTLVFQG), and 408–433 (KIEKQIEKVKHFLETMPHLEQLVLHY).

The chain is Putative F-box/LRR-repeat protein At3g59160 from Arabidopsis thaliana (Mouse-ear cress).